We begin with the raw amino-acid sequence, 228 residues long: Ion-translocating oxidoreductase complex subunit G (228 aa).

Residues 35–55 (ALSLGLVCALVAVALLLGNQL) traverse the membrane as a helical segment. Thr197 is modified (FMN phosphoryl threonine).

Belongs to the RnfG family. The complex is composed of six subunits: RnfA, RnfB, RnfC, RnfD, RnfE and RnfG. FMN is required as a cofactor.

It localises to the cell inner membrane. Its function is as follows. Part of a membrane-bound complex that couples electron transfer with translocation of ions across the membrane. This Stutzerimonas stutzeri (Pseudomonas stutzeri) protein is Ion-translocating oxidoreductase complex subunit G.